The sequence spans 388 residues: Chorismate synthase (388 aa).

Arg39 and Arg45 together coordinate NADP(+). Residues 130–132 (RSS), 251–252 (NA), Gly296, 311–315 (KPIPT), and Arg337 contribute to the FMN site.

It belongs to the chorismate synthase family. Homotetramer. The cofactor is FMNH2.

It catalyses the reaction 5-O-(1-carboxyvinyl)-3-phosphoshikimate = chorismate + phosphate. The protein operates within metabolic intermediate biosynthesis; chorismate biosynthesis; chorismate from D-erythrose 4-phosphate and phosphoenolpyruvate: step 7/7. Catalyzes the anti-1,4-elimination of the C-3 phosphate and the C-6 proR hydrogen from 5-enolpyruvylshikimate-3-phosphate (EPSP) to yield chorismate, which is the branch point compound that serves as the starting substrate for the three terminal pathways of aromatic amino acid biosynthesis. This reaction introduces a second double bond into the aromatic ring system. The sequence is that of Chorismate synthase from Streptococcus pyogenes serotype M2 (strain MGAS10270).